An 894-amino-acid polypeptide reads, in one-letter code: Septin and tuftelin-interacting protein 1 homolog (894 aa).

Disordered stretches follow at residues 71-149 (YEPN…DKPV) and 187-225 (NAGL…RSLG). Basic and acidic residues predominate over residues 73–84 (PNEHKLKNKDGE). Positions 97-126 (KKKKKEKKEKKQKKKEKKEKKEKKNKKKNK) are enriched in basic residues. Residues 149-195 (VGGIGAALLSKMGYKGTGGLGRDGGGMVEPIKVQVRPKNAGLASVTE) form the G-patch domain. Acidic residues predominate over residues 202–217 (DDSDDSDQSEGDTDSD). A coiled-coil region spans residues 329-449 (KQIDIQNQDN…SDNNDNSSLE (121 aa)). The segment at 785–821 (NNNNNNNINNSYQQQNQQQPIKPISSPSLNSSNNNNI) is disordered.

It belongs to the TFP11/STIP family. As to quaternary structure, identified in the spliceosome C complex.

It is found in the cytoplasm. It localises to the nucleus. Its function is as follows. May be involved in pre-mRNA splicing. The sequence is that of Septin and tuftelin-interacting protein 1 homolog (stip-1) from Dictyostelium discoideum (Social amoeba).